Reading from the N-terminus, the 97-residue chain is YcgL domain-containing protein PputGB1_4120 (97 aa).

A YcgL domain is found at 3–87 (RICSIYKSPR…AEDEYIEHLP (85 aa)).

This Pseudomonas putida (strain GB-1) protein is YcgL domain-containing protein PputGB1_4120.